The following is a 338-amino-acid chain: MSTLRLLISDSYDPWFNLAVEECIFRQMPATQRVLFLWRNADTVVIGRAQNPWKECNTRRMEEDNVRLARRSSGGGAVFHDLGNTCFTFMAGKPEYDKTISTSIVLNALNALGVSAEASGRNDLVVKTAEGDRKVSGSAYRETKDRGFHHGTLLLNADLSRLANYLNPDKKKLAAKGITSVRSRVTNLTELLPGITHEQVCEAIREAFFAHYGERVEAEIISPDKTPDLPNFAETFARQSSWEWNFGQAPAFSHLLDERFSWGGVELHFDVEKGHITRAQVFTDSLNPAPLEALAGRLQGCLYRADMLQQECEALLVDFPEQEKELPELSAWIAGAVR.

The BPL/LPL catalytic domain occupies 29–216 (PATQRVLFLW…AFFAHYGERV (188 aa)). Residues R71, 76-79 (GAVF), and K134 contribute to the ATP site. Residue K134 participates in (R)-lipoate binding.

The protein belongs to the LplA family. In terms of assembly, monomer.

The protein localises to the cytoplasm. It catalyses the reaction L-lysyl-[lipoyl-carrier protein] + (R)-lipoate + ATP = N(6)-[(R)-lipoyl]-L-lysyl-[lipoyl-carrier protein] + AMP + diphosphate + H(+). Its pathway is protein modification; protein lipoylation via exogenous pathway; protein N(6)-(lipoyl)lysine from lipoate: step 1/2. The protein operates within protein modification; protein lipoylation via exogenous pathway; protein N(6)-(lipoyl)lysine from lipoate: step 2/2. Its function is as follows. Catalyzes both the ATP-dependent activation of exogenously supplied lipoate to lipoyl-AMP and the transfer of the activated lipoyl onto the lipoyl domains of lipoate-dependent enzymes. The chain is Lipoate-protein ligase A from Escherichia coli O6:H1 (strain CFT073 / ATCC 700928 / UPEC).